Here is a 37-residue protein sequence, read N- to C-terminus: NAD-reducing hydrogenase HoxS subunit alpha (37 aa).

It belongs to the complex I 51 kDa subunit family. In terms of assembly, tetramer of an alpha and a gamma subunits (flavin-containing dimer), and a delta and a nickel-containing beta subunits (hydrogenase dimer). FMN serves as cofactor. [4Fe-4S] cluster is required as a cofactor.

The protein resides in the cytoplasm. The enzyme catalyses H2 + NAD(+) = NADH + H(+). In terms of biological role, subunits alpha and gamma of HoxS constitute an NADH--oxidoreductase. The protein is NAD-reducing hydrogenase HoxS subunit alpha (hoxF) of Rhodococcus opacus (Nocardia opaca).